The following is a 200-amino-acid chain: Chromophore lyase CpcS/CpeS (200 aa).

It belongs to the CpcS/CpeS biliprotein lyase family.

Covalently attaches a chromophore to Cys residue(s) of phycobiliproteins. This is Chromophore lyase CpcS/CpeS from Synechococcus sp. (strain WH8020).